The following is an 805-amino-acid chain: Polyribonucleotide nucleotidyltransferase (805 aa).

Mg(2+)-binding residues include D491 and D497. Positions 558–617 (PRMESMIIDKNKIKNVIGTGGKNVREICEKTGVKIEISQDGTVMIYAVSRDAVEEAKNMI) constitute a KH domain. One can recognise an S1 motif domain in the interval 627 to 694 (GKVFSGVISE…DKDHVQLSMR (68 aa)). The interval 702–805 (DLLEHESYSS…GGGNKKPRFF (104 aa)) is disordered. The segment covering 709 to 721 (YSSSKKNGPQSGD) has biased composition (polar residues).

This sequence belongs to the polyribonucleotide nucleotidyltransferase family. Mg(2+) is required as a cofactor.

The protein resides in the cytoplasm. The enzyme catalyses RNA(n+1) + phosphate = RNA(n) + a ribonucleoside 5'-diphosphate. Its function is as follows. Involved in mRNA degradation. Catalyzes the phosphorolysis of single-stranded polyribonucleotides processively in the 3'- to 5'-direction. In Anaplasma marginale (strain St. Maries), this protein is Polyribonucleotide nucleotidyltransferase.